The following is a 239-amino-acid chain: Xyloglucan-specific endo-beta-1,4-glucanase A (239 aa).

Residues 1–14 (MKLLALSLASLASA) form the signal peptide. A glycan (N-linked (GlcNAc...) asparagine) is linked at N172.

This sequence belongs to the glycosyl hydrolase 12 (cellulase H) family.

It localises to the secreted. It carries out the reaction xyloglucan + H2O = xyloglucan oligosaccharides.. Catalyzes endohydrolysis of 1,4-beta-D-glucosidic linkages in xyloglucan with retention of the beta-configuration of the glycosyl residues. Specific for xyloglucan and does not hydrolyze other cell wall components. Active against tamarind xyloglucan. The chain is Xyloglucan-specific endo-beta-1,4-glucanase A (xgeA) from Emericella nidulans (strain FGSC A4 / ATCC 38163 / CBS 112.46 / NRRL 194 / M139) (Aspergillus nidulans).